The chain runs to 481 residues: Ras-GEF domain-containing family member 1A (481 aa).

One can recognise an N-terminal Ras-GEF domain in the interval 41-170 (QDGHLISGSL…AIAQMTQSLL (130 aa)). The Ras-GEF domain maps to 214–461 (DPLVLAQQLT…FVASFESEGP (248 aa)).

In terms of tissue distribution, detected in brain and spinal cord. Highly expressed in a number of intrahepatic cholangiocarcinoma tissue biopsies.

Guanine nucleotide exchange factor (GEF) with specificity for RAP2A, KRAS, HRAS, and NRAS (in vitro). Plays a role in cell migration. The sequence is that of Ras-GEF domain-containing family member 1A (RASGEF1A) from Homo sapiens (Human).